The chain runs to 262 residues: tRNA pseudouridine synthase A (262 aa).

Residue Asp51 is the Nucleophile of the active site. Tyr109 contributes to the substrate binding site.

It belongs to the tRNA pseudouridine synthase TruA family. In terms of assembly, homodimer.

The enzyme catalyses uridine(38/39/40) in tRNA = pseudouridine(38/39/40) in tRNA. Functionally, formation of pseudouridine at positions 38, 39 and 40 in the anticodon stem and loop of transfer RNAs. The sequence is that of tRNA pseudouridine synthase A from Actinobacillus pleuropneumoniae serotype 7 (strain AP76).